A 265-amino-acid polypeptide reads, in one-letter code: 3-deoxy-manno-octulosonate cytidylyltransferase 2 (265 aa).

Belongs to the KdsB family.

It localises to the cytoplasm. It carries out the reaction 3-deoxy-alpha-D-manno-oct-2-ulosonate + CTP = CMP-3-deoxy-beta-D-manno-octulosonate + diphosphate. It participates in nucleotide-sugar biosynthesis; CMP-3-deoxy-D-manno-octulosonate biosynthesis; CMP-3-deoxy-D-manno-octulosonate from 3-deoxy-D-manno-octulosonate and CTP: step 1/1. The protein operates within bacterial outer membrane biogenesis; lipopolysaccharide biosynthesis. Functionally, activates KDO (a required 8-carbon sugar) for incorporation into bacterial lipopolysaccharide in Gram-negative bacteria. The sequence is that of 3-deoxy-manno-octulosonate cytidylyltransferase 2 from Burkholderia lata (strain ATCC 17760 / DSM 23089 / LMG 22485 / NCIMB 9086 / R18194 / 383).